The chain runs to 298 residues: Junctional adhesion molecule B (298 aa).

The first 28 residues, 1–28, serve as a signal peptide directing secretion; that stretch reads MARRSRHRLLLLLLRYLVVALGYHKAYG. Residues 29 to 238 are Extracellular-facing; it reads FSAPKDQQVV…RMQVDDLNIS (210 aa). The region spanning 32 to 127 is the Ig-like V-type domain; sequence PKDQQVVTAV…GQNLEEDTVT (96 aa). 2 disulfides stabilise this stretch: Cys50-Cys109 and Cys155-Cys214. N-linked (GlcNAc...) asparagine glycosylation is found at Asn98, Asn187, and Asn236. One can recognise an Ig-like C2-type domain in the interval 134–238; it reads PAVPSCEVPS…RMQVDDLNIS (105 aa). A helical transmembrane segment spans residues 239 to 259; sequence GIIAAVVVVALVISVCGLGVC. At 260–298 the chain is on the cytoplasmic side; that stretch reads YAQRKGYFSKETSFQKSNSSSKATTMSENDFKHTKSFII.

The protein belongs to the immunoglobulin superfamily. Highly expressed in heart, placenta, lung, foreskin and lymph node. Prominently expressed on high endothelial venules and also present on the endothelia of other vessels (at protein level). Also expressed in the brain in the caudate nuclei.

The protein localises to the cell membrane. The protein resides in the cell junction. Its subcellular location is the tight junction. Functionally, junctional adhesion protein that mediates heterotypic cell-cell interactions with its cognate receptor JAM3 to regulate different cellular processes. Plays a role in homing and mobilization of hematopoietic stem and progenitor cells within the bone marrow. At the surface of bone marrow stromal cells, it contributes to the retention of the hematopoietic stem and progenitor cells expressing JAM3. Plays a central role in leukocytes extravasation by facilitating not only transmigration but also tethering and rolling of leukocytes along the endothelium. Tethering and rolling of leukocytes are dependent on the binding by JAM2 of the integrin alpha-4/beta-1. Plays a role in spermatogenesis where JAM2 and JAM3, which are respectively expressed by Sertoli and germ cells, mediate an interaction between both cell types and play an essential role in the anchorage of germ cells onto Sertoli cells and the assembly of cell polarity complexes during spermatid differentiation. Also functions as an inhibitory somatodendritic cue that prevents the myelination of non-axonal parts of neurons. During myogenesis, it is involved in myocyte fusion. May also play a role in angiogenesis. This is Junctional adhesion molecule B from Homo sapiens (Human).